The chain runs to 392 residues: Iripin-4 (392 aa).

Residues 1 to 16 (MRSLATFMSLLTICWG) form the signal peptide. Residues asparagine 104, asparagine 130, and asparagine 265 are each glycosylated (N-linked (GlcNAc...) asparagine).

This sequence belongs to the serpin family. Female salivary gland.

It is found in the secreted. Its function is as follows. Serpin with unknown function. Weakly inhibits human granzyme B (GZMB). Acts as a substrate for porcine elastase. In Ixodes ricinus (Common tick), this protein is Iripin-4.